The following is a 102-amino-acid chain: Small ribosomal subunit protein uS10 (102 aa).

It belongs to the universal ribosomal protein uS10 family. As to quaternary structure, part of the 30S ribosomal subunit.

In terms of biological role, involved in the binding of tRNA to the ribosomes. The polypeptide is Small ribosomal subunit protein uS10 (Methanococcus maripaludis (strain C7 / ATCC BAA-1331)).